We begin with the raw amino-acid sequence, 527 residues long: DNA polymerase epsilon subunit 2 (527 aa).

The protein belongs to the DNA polymerase epsilon subunit B family. Component of the DNA polymerase epsilon complex consisting of four subunits: the catalytic subunit POLE and the accessory subunits POLE2, POLE3 and POLE4.

The protein localises to the nucleus. Accessory component of the DNA polymerase epsilon complex. Participates in DNA repair and in chromosomal DNA replication. This is DNA polymerase epsilon subunit 2 (POLE2) from Bos taurus (Bovine).